Reading from the N-terminus, the 68-residue chain is Putative membrane protein insertion efficiency factor (68 aa).

This sequence belongs to the UPF0161 family.

It is found in the cell inner membrane. Could be involved in insertion of integral membrane proteins into the membrane. In Aquifex aeolicus (strain VF5), this protein is Putative membrane protein insertion efficiency factor.